We begin with the raw amino-acid sequence, 121 residues long: NLFQFRKMIKKMTKKEPVVYYAFYGCYCGKGGRGKPKDATDRCCFVHDCCYEKVTGCNPKWGYYTYSMNKQIVCGGDDPCKKQVCECDKAAAICFRDNLKTYKKKYMSFPNFFCTDPSEKC.

Intrachain disulfides connect cysteine 26/cysteine 114, cysteine 28/cysteine 44, cysteine 43/cysteine 94, cysteine 49/cysteine 121, cysteine 50/cysteine 87, cysteine 57/cysteine 80, and cysteine 74/cysteine 85. Ca(2+) is bound by residues tyrosine 27, glycine 29, and glycine 31. Residue histidine 47 is part of the active site. A Ca(2+)-binding site is contributed by aspartate 48. The active site involves aspartate 88.

Homopentamer. Ca(2+) is required as a cofactor. As to expression, expressed by the venom gland.

Its subcellular location is the secreted. The enzyme catalyses a 1,2-diacyl-sn-glycero-3-phosphocholine + H2O = a 1-acyl-sn-glycero-3-phosphocholine + a fatty acid + H(+). Snake venom phospholipase A2 (PLA2) that displays moderate myotoxic activity in vivo, and cytotoxic activity in vitro. In vitro, shows anticoagulant activity on human plasma and in mice causes inflammatory cell infiltration and myonecrosis in the gastrocnemius muscles of CD-1 mice 3 hours after injection (100 ug). PLA2 catalyzes the calcium-dependent hydrolysis of the 2-acyl groups in 3-sn-phosphoglycerides. In Porthidium ophryomegas (Slender hognose viper), this protein is Basic phospholipase A2.